We begin with the raw amino-acid sequence, 265 residues long: uncharacterized protein (265 aa).

A signal peptide spans 1–23 (MNYFRILYCSVLLFFSFFSCTSA). The NodB homology domain occupies 67–248 (KEIYLTFDNG…TLKQQGYTFK (182 aa)).

It belongs to the polysaccharide deacetylase family.

This is an uncharacterized protein from Geobacillus stearothermophilus (Bacillus stearothermophilus).